The following is a 225-amino-acid chain: Superantigen-like protein 11 (225 aa).

An N-terminal signal peptide occupies residues 1–30 (MKLKNIAKASLALGILTTGMITTTAQPVKA). Residues 94-196 (VDIFVVRENS…RITMKDGGFY (103 aa)) are sialyl Lewis X-binding.

Belongs to the staphylococcal/streptococcal toxin family. Homodimer (via its C-terminal domain). Interacts with host FCAR and SELPLG (via sialyl Lewis X).

The protein resides in the secreted. Secreted protein that plays a role in the inhibition of host immune system. Targets myeloid cells such as monocytes or granulocytes through binding with sialyllactosamine-containing glycoproteins. Prevents initial rolling of neutrophils toward the site of infection by interacting with host SELPLG. Disrupts neutrophil motility by induction of cell adhesion via interacting with glycans but independently of SELPLG. This is Superantigen-like protein 11 from Staphylococcus aureus (strain Newman).